A 121-amino-acid polypeptide reads, in one-letter code: Small ribosomal subunit protein uS13 (121 aa).

Positions 92–121 (RKGLPVRGQSSKTNARTVKGPRKTVANKKK) are disordered. A compositionally biased stretch (basic residues) spans 110–121 (KGPRKTVANKKK).

This sequence belongs to the universal ribosomal protein uS13 family. As to quaternary structure, part of the 30S ribosomal subunit. Forms a loose heterodimer with protein S19. Forms two bridges to the 50S subunit in the 70S ribosome.

Located at the top of the head of the 30S subunit, it contacts several helices of the 16S rRNA. In the 70S ribosome it contacts the 23S rRNA (bridge B1a) and protein L5 of the 50S subunit (bridge B1b), connecting the 2 subunits; these bridges are implicated in subunit movement. Contacts the tRNAs in the A and P-sites. The sequence is that of Small ribosomal subunit protein uS13 from Mycoplasma capricolum subsp. capricolum (strain California kid / ATCC 27343 / NCTC 10154).